The primary structure comprises 1733 residues: Collagen alpha-1(XXIV) chain (1733 aa).

Positions 1–35 are cleaved as a signal peptide; it reads MHLGAYRTRHGKVSPTTETKLFLRFIVLCVVWISV. Residues 102 to 229 enclose the Laminin G-like domain; it reads ISLRQPLTVL…TVCQLEIMPS (128 aa). N-linked (GlcNAc...) asparagine glycosylation occurs at Asn157. A disordered region spans residues 257 to 335; that stretch reads PHTAGMPTRH…SQEHQTPRAQ (79 aa). A compositionally biased stretch (polar residues) spans 312 to 324; it reads IPNNRSNGSATVH. N-linked (GlcNAc...) asparagine glycosylation is found at Asn366, Asn396, and Asn448. The interval 505 to 1499 is disordered; the sequence is YLRGPKGDPG…GPPGAPGPRR (995 aa). Collagen-like domains are found at residues 506–561, 577–636, 679–738, 742–801, 802–861, 886–945, 946–1005, 1006–1065, 1072–1131, 1135–1189, 1191–1215, 1220–1279, 1316–1375, 1376–1435, and 1439–1498; these read LRGP…PGLS, GLVG…KGVR, GPAG…KGEQ, GEPG…PGQN, GPEG…KGEV, GSIG…KGQR, GPRG…SGDV, GPAG…PGPR, GEEG…PGQR, GKKG…GIPG, RGHQ…PGED, GPPG…KGER, GVDG…KGEQ, GLPG…AGIV, and GPKG…PGPR. Residues 512 to 524 show a composition bias toward pro residues; the sequence is DPGPPGPPGPMGI. Composition is skewed to low complexity over residues 573 to 599 and 699 to 708; these read PGLL…LPGL and PGVTGSVGPA. A compositionally biased stretch (pro residues) spans 776–789; sequence DPGPQGPSGPPGPE. Pro residues predominate over residues 912–921; it reads PGPPGAPGPM. Residues 923-944 show a composition bias toward low complexity; the sequence is PLGLPGLVGARGAPGSPGPKGQ. Over residues 1045-1054 the composition is skewed to gly residues; sequence GAKGDGGPAG. A compositionally biased stretch (low complexity) spans 1056-1074; it reads AGATGEPGPRGEPGAPGEE. The span at 1084–1093 shows a compositional bias: gly residues; sequence GAPGGSGLPG. The span at 1175–1205 shows a compositional bias: low complexity; the sequence is PLGLMGPEGEPGIPGYRGHQGQPGPSGLPGP. Residues 1237 to 1246 show a composition bias toward basic and acidic residues; the sequence is TGEHGEEGYK. Over residues 1323 to 1339 the composition is skewed to low complexity; that stretch reads YPGKPGLPGKQGLLGVP. Gly residues predominate over residues 1352–1361; the sequence is GPQGGKGASG. Low complexity-rich tracts occupy residues 1371–1386 and 1434–1444; these read PKGE…VPGQ and IVGIVGPKGPI. Over residues 1485 to 1495 the composition is skewed to pro residues; sequence QPGPPGPPGAP. The Fibrillar collagen NC1 domain maps to 1534–1733; the sequence is SDIFKTLTYL…YIESNSVCFL (200 aa).

This sequence belongs to the fibrillar collagen family. Expressed in skeleton. Found at ossification centers of the craniofacial, axial and appendicular skeleton. Also expressed in retina and to a lower extent in cornea, skin and tendon.

The protein resides in the secreted. It is found in the extracellular space. Its subcellular location is the extracellular matrix. In terms of biological role, involved in osteoblast differentiation. The chain is Collagen alpha-1(XXIV) chain (Col24a1) from Mus musculus (Mouse).